We begin with the raw amino-acid sequence, 233 residues long: Antiholin-like protein LrgB (233 aa).

6 helical membrane passes run 5–25 (LGIN…VIAT), 33–53 (GFFL…FLKL), 63–83 (IGGD…AIPL), 97–117 (IFGG…LVAI), 152–172 (LTSL…AKIV), and 212–232 (IAVV…APIL).

This sequence belongs to the CidB/LrgB family. LrgB subfamily.

The protein localises to the cell membrane. In terms of biological role, inhibits the expression or activity of extracellular murein hydrolases by interacting, possibly with LrgA, with the holin-like proteins CidA and/or CidB. The LrgAB and CidAB proteins may affect the proton motive force of the membrane. May be involved in programmed cell death (PCD), possibly triggering PCD in response to antibiotics and environmental stresses. This is Antiholin-like protein LrgB from Staphylococcus epidermidis (strain ATCC 35984 / DSM 28319 / BCRC 17069 / CCUG 31568 / BM 3577 / RP62A).